Consider the following 481-residue polypeptide: RuvB-like helicase 2 (481 aa).

73–80 contacts ATP; the sequence is GEPSTGKT. The segment at 453–481 is disordered; it reads EEVERDPAAGGGAKRRVEGGGGDAQPMEH.

The protein belongs to the RuvB family. In terms of assembly, forms homohexameric rings. May form a dodecamer with rept made of two stacked hexameric rings. Component of the chromatin remodeling Ino80 complex. Interacts with Myc and pont. Higher expression occurs in primordia of mesoderm, anterior and posterior midgut and cephalic furrow early in gastrulation, as well as in endoderm and mesoderm lineages during germ band extension. Later in development expression is only maintained in endoderm cells. Expressed in thoracic and abdominal segment neural precursors of all embryonic chordotonal organs.

The protein localises to the nucleus. It carries out the reaction ATP + H2O = ADP + phosphate + H(+). In terms of biological role, acts as a transcriptional coactivator in Wg signaling caused by altered arm signaling. Pont and rept interfere antagonistically with nuclear arm signaling function, and are required to enhance or reduce arm activity, respectively. Also an essential cofactor for the normal function of Myc; required for cellular proliferation and growth. Its function is as follows. Proposed core component of the chromatin remodeling Ino80 complex which is involved in transcriptional regulation, DNA replication and probably DNA repair. In Drosophila melanogaster (Fruit fly), this protein is RuvB-like helicase 2.